The sequence spans 435 residues: Methylenetetrahydrofolate--tRNA-(uracil-5-)-methyltransferase TrmFO (435 aa).

9 to 14 (GAGLAG) contacts FAD.

The protein belongs to the MnmG family. TrmFO subfamily. FAD is required as a cofactor.

The protein resides in the cytoplasm. The catalysed reaction is uridine(54) in tRNA + (6R)-5,10-methylene-5,6,7,8-tetrahydrofolate + NADH + H(+) = 5-methyluridine(54) in tRNA + (6S)-5,6,7,8-tetrahydrofolate + NAD(+). It carries out the reaction uridine(54) in tRNA + (6R)-5,10-methylene-5,6,7,8-tetrahydrofolate + NADPH + H(+) = 5-methyluridine(54) in tRNA + (6S)-5,6,7,8-tetrahydrofolate + NADP(+). In terms of biological role, catalyzes the folate-dependent formation of 5-methyl-uridine at position 54 (M-5-U54) in all tRNAs. In Staphylococcus haemolyticus (strain JCSC1435), this protein is Methylenetetrahydrofolate--tRNA-(uracil-5-)-methyltransferase TrmFO.